A 398-amino-acid chain; its full sequence is Subtilisin-like serine protease EN45_076310 (398 aa).

The signal sequence occupies residues 1 to 19; that stretch reads MGFLKLLSTSLATLAVVNA. Positions 20–115 are cleaved as a propeptide — removed in mature form; the sequence is GKLLTANDGD…VEPDMVVNAT (96 aa). Residues 35 to 113 enclose the Inhibitor I9 domain; the sequence is SYIVVMNDGV…KYVEPDMVVN (79 aa). N-linked (GlcNAc...) asparagine glycosylation occurs at asparagine 113. Residues 124–134 form an igE-binding region; that stretch reads PSWGLSRISSK. In terms of domain architecture, Peptidase S8 spans 125-398; it reads SWGLSRISSK…KLLYNGINAQ (274 aa). Aspartate 157 acts as the Charge relay system in catalysis. The interval 163–170 is igE-binding; sequence GHADFGGR. The disordered stretch occupies residues 175 to 195; that stretch reads TNTADNDDTDGNGHGTHTAST. Histidine 188 (charge relay system) is an active-site residue. The tract at residues 227 to 245 is igE-binding; the sequence is IAGMDWAVKDSKSRGATGK. N-linked (GlcNAc...) asparagine glycosylation is present at asparagine 249. The interval 310–318 is igE-binding; sequence SFTNFGSVV. The Charge relay system role is filled by serine 343.

It belongs to the peptidase S8 family.

The protein localises to the secreted. Inhibited by phenylmethanesulfonyl fluoride (PMSF) and diethyl pyrocarbonate (DEPC), but not by benzamidine. Functionally, serine protease that hydrolyzes casein, gelatin and human collagen type IV, but not elastin in vitro. Hydrolyzes OCLN of the human lung epithelial cells at 202-Gln-|-Ser-203 and Gln-211-|-Ile-212. The sequence is that of Subtilisin-like serine protease EN45_076310 from Penicillium chrysogenum (Penicillium notatum).